We begin with the raw amino-acid sequence, 101 residues long: uncharacterized protein (101 aa).

Residues Phe13–Phe33 traverse the membrane as a helical segment.

Its subcellular location is the membrane. This is an uncharacterized protein from Schizosaccharomyces pombe (strain 972 / ATCC 24843) (Fission yeast).